Reading from the N-terminus, the 422-residue chain is COUP transcription factor 1 (422 aa).

Positions 1-80 (MAMVVSSWRD…QGPPGSGQSQ (80 aa)) are disordered. Residues 39–66 (EQQQAGSGAPHTPQTPGQPGAPATPGTQ) show a composition bias toward low complexity. A DNA-binding region (nuclear receptor) is located at residues 82 to 157 (HIECVVCGDK…VGMRREAVQR (76 aa)). 2 consecutive NR C4-type zinc fingers follow at residues 85 to 105 (CVVC…CEGC) and 121 to 145 (CRAN…LKKC). One can recognise an NR LBD domain in the interval 183–409 (YLSGYISLLL…TLIRDMLLSG (227 aa)). Residues 343 to 422 (LQEKSQCALE…NWPYMSIQCS (80 aa)) are important for dimerization.

Belongs to the nuclear hormone receptor family. NR2 subfamily. In terms of assembly, binds DNA as dimer; homodimer and probable heterodimer with NR2F6. Interacts with GTF2B; this interaction is direct. Interacts with COPS2.

The protein resides in the nucleus. In terms of biological role, coup (chicken ovalbumin upstream promoter) transcription factor binds to the ovalbumin promoter and, in conjunction with another protein (S300-II) stimulates initiation of transcription. Binds to both direct repeats and palindromes of the 5'-AGGTCA-3' motif. Represses transcriptional activity of LHCG. The sequence is that of COUP transcription factor 1 (Nr2f1) from Mus musculus (Mouse).